The sequence spans 254 residues: Homeobox protein BarH-like 1 (254 aa).

Residues 1–20 (MQRPGEPGAARFGPPEGCAD) form a disordered region. The segment at residues 142–201 (GRRSRTVFTELQLMGLEKRFEKQKYLSTPDRIDLAESLGLSQLQVKTWYQNRRMKWKKIV) is a DNA-binding region (homeobox). The disordered stretch occupies residues 204-254 (GGGLESPTKPKGRPKKNSIPTSEQLTEQERAKDAEKPAEVPGEPSDRSRED). Residues 230-254 (EQERAKDAEKPAEVPGEPSDRSRED) are compositionally biased toward basic and acidic residues.

Belongs to the BAR homeobox family. Widely expressed. Expressed at higher levels in testis and heart. Detected in craniofacial tissue and adult iris, but not in lymphocytes, fibroblasts, choroid retina, retinal pigment epithelium, kidney, or fetal liver.

It localises to the nucleus. In terms of biological role, transcription factor, which is involved in craniofacial development, in odontogenesis and in stomach organogenesis. May have a role in the differentiation of molars from incisors. Plays a role in suppressing endodermal Wnt activity. Binds to a regulatory module of the NCAM promoter. In Homo sapiens (Human), this protein is Homeobox protein BarH-like 1 (BARX1).